Consider the following 768-residue polypeptide: Calcium up-regulated protein G (768 aa).

A disordered region spans residues 1–22; that stretch reads MINIEDISKSSNQSEEKQLKST. Ricin B-type lectin domains follow at residues 1 to 107 and 100 to 248; these read MINI…WTID and KTQI…WGIN.

Belongs to the cup family.

It is found in the cytoplasm. It localises to the membrane. In terms of biological role, may play an important role in stabilizing and/or regulating the cell membrane during Ca(2+) stress or certain stages of development. This Dictyostelium discoideum (Social amoeba) protein is Calcium up-regulated protein G (cupG).